The following is a 497-amino-acid chain: ATP-dependent RNA helicase CshA (497 aa).

The Q motif signature appears at 1-29 (MKFSELGLSDSLLKAIKRSGYEEATPIQE). The 171-residue stretch at 32–202 (IPMVLEGKDV…VQFMSDPETV (171 aa)) folds into the Helicase ATP-binding domain. 45 to 52 (AQTGTGKT) is a binding site for ATP. The DEAD box signature appears at 150 to 153 (DEAD). Positions 228 to 373 (DIMTRLIDVQ…PLKPPTAEEA (146 aa)) constitute a Helicase C-terminal domain. Positions 425-497 (AASEVPVKIT…SFNIRHRKEN (73 aa)) are disordered. Residues 448 to 458 (RNGNRNNSHGG) show a composition bias toward low complexity. 2 stretches are compositionally biased toward basic residues: residues 459-473 (NHYRRKNFRRHQHGS) and 481-497 (KSHSSRHSFNIRHRKEN).

This sequence belongs to the DEAD box helicase family. CshA subfamily. As to quaternary structure, oligomerizes, may be a member of the RNA degradosome.

It is found in the cytoplasm. The protein localises to the cell membrane. It catalyses the reaction ATP + H2O = ADP + phosphate + H(+). DEAD-box RNA helicase possibly involved in RNA degradation. Unwinds dsRNA in both 5'- and 3'-directions, has RNA-dependent ATPase activity. Over-expression leads to cell aggregation. This Limosilactobacillus reuteri (Lactobacillus reuteri) protein is ATP-dependent RNA helicase CshA.